Here is a 260-residue protein sequence, read N- to C-terminus: Glutathione S-transferase domain-containing protein DDB_G0280881 (260 aa).

The region spanning 7-96 (KVDFIFYTNG…YLAQKYNTFL (90 aa)) is the GST N-terminal domain. The GST C-terminal domain maps to 102–228 (NPKENSDVIT…QQISEGFKNF (127 aa)).

The protein belongs to the GST superfamily.

This Dictyostelium discoideum (Social amoeba) protein is Glutathione S-transferase domain-containing protein DDB_G0280881.